A 369-amino-acid chain; its full sequence is Molybdenum import ATP-binding protein ModC (369 aa).

Residues 7 to 243 (PGQAGIHARF…LDLPMAMTDD (237 aa)) enclose the ABC transporter domain. 41–48 (GQSGSGKT) contributes to the ATP binding site. The Mop domain occupies 304–369 (EGSILNVLAV…AQIKAVSLLA (66 aa)).

This sequence belongs to the ABC transporter superfamily. Molybdate importer (TC 3.A.1.8) family. In terms of assembly, the complex is composed of two ATP-binding proteins (ModC), two transmembrane proteins (ModB) and a solute-binding protein (ModA).

Its subcellular location is the cell inner membrane. It carries out the reaction molybdate(out) + ATP + H2O = molybdate(in) + ADP + phosphate + H(+). In terms of biological role, part of the ABC transporter complex ModABC involved in molybdenum import. Responsible for energy coupling to the transport system. The protein is Molybdenum import ATP-binding protein ModC of Bordetella pertussis (strain Tohama I / ATCC BAA-589 / NCTC 13251).